The following is a 437-amino-acid chain: ATP-dependent protease ATPase subunit HslU (437 aa).

ATP contacts are provided by residues Val18, 60–65 (GCGKTE), Asp250, Glu315, and Arg387.

The protein belongs to the ClpX chaperone family. HslU subfamily. In terms of assembly, a double ring-shaped homohexamer of HslV is capped on each side by a ring-shaped HslU homohexamer. The assembly of the HslU/HslV complex is dependent on binding of ATP.

Its subcellular location is the cytoplasm. Its function is as follows. ATPase subunit of a proteasome-like degradation complex; this subunit has chaperone activity. The binding of ATP and its subsequent hydrolysis by HslU are essential for unfolding of protein substrates subsequently hydrolyzed by HslV. HslU recognizes the N-terminal part of its protein substrates and unfolds these before they are guided to HslV for hydrolysis. The chain is ATP-dependent protease ATPase subunit HslU from Methylobacterium radiotolerans (strain ATCC 27329 / DSM 1819 / JCM 2831 / NBRC 15690 / NCIMB 10815 / 0-1).